The sequence spans 93 residues: Small ribosomal subunit protein uS19 (93 aa).

The protein belongs to the universal ribosomal protein uS19 family.

In terms of biological role, protein S19 forms a complex with S13 that binds strongly to the 16S ribosomal RNA. This is Small ribosomal subunit protein uS19 from Campylobacter jejuni subsp. jejuni serotype O:6 (strain 81116 / NCTC 11828).